The chain runs to 92 residues: Small ribosomal subunit protein uS19 (92 aa).

Belongs to the universal ribosomal protein uS19 family.

Its function is as follows. Protein S19 forms a complex with S13 that binds strongly to the 16S ribosomal RNA. The sequence is that of Small ribosomal subunit protein uS19 from Bradyrhizobium diazoefficiens (strain JCM 10833 / BCRC 13528 / IAM 13628 / NBRC 14792 / USDA 110).